The chain runs to 350 residues: DNA polymerase IV (350 aa).

The UmuC domain occupies 4 to 185 (IIHIDMDCFY…LPLGKLPGIG (182 aa)). Positions 8 and 103 each coordinate Mg(2+). Residue E104 is part of the active site.

Belongs to the DNA polymerase type-Y family. Monomer. Mg(2+) serves as cofactor.

The protein localises to the cytoplasm. The catalysed reaction is DNA(n) + a 2'-deoxyribonucleoside 5'-triphosphate = DNA(n+1) + diphosphate. Functionally, poorly processive, error-prone DNA polymerase involved in untargeted mutagenesis. Copies undamaged DNA at stalled replication forks, which arise in vivo from mismatched or misaligned primer ends. These misaligned primers can be extended by PolIV. Exhibits no 3'-5' exonuclease (proofreading) activity. May be involved in translesional synthesis, in conjunction with the beta clamp from PolIII. In Aeromonas hydrophila subsp. hydrophila (strain ATCC 7966 / DSM 30187 / BCRC 13018 / CCUG 14551 / JCM 1027 / KCTC 2358 / NCIMB 9240 / NCTC 8049), this protein is DNA polymerase IV.